We begin with the raw amino-acid sequence, 263 residues long: Metaxin-2 (263 aa).

Serine 2 carries the N-acetylserine modification.

The protein belongs to the metaxin family. In terms of assembly, interacts with MTX1/metaxin-1. Associates with the mitochondrial contact site and cristae organizing system (MICOS) complex, composed of at least MICOS10/MIC10, CHCHD3/MIC19, CHCHD6/MIC25, APOOL/MIC27, IMMT/MIC60, APOO/MIC23/MIC26 and QIL1/MIC13. This complex was also known under the names MINOS or MitOS complex. The MICOS complex associates with mitochondrial outer membrane proteins SAMM50, MTX1 and MTX2 (together described as components of the mitochondrial outer membrane sorting assembly machinery (SAM) complex) and DNAJC11, mitochondrial inner membrane protein TMEM11 and with HSPA9. The MICOS and SAM complexes together with DNAJC11 are part of a large protein complex spanning both membranes termed the mitochondrial intermembrane space bridging (MIB) complex.

Its subcellular location is the mitochondrion outer membrane. It is found in the mitochondrion. Involved in transport of proteins into the mitochondrion. This Mus musculus (Mouse) protein is Metaxin-2 (Mtx2).